Consider the following 337-residue polypeptide: Tetraacyldisaccharide 4'-kinase (337 aa).

55-62 (NAGGTGKT) is an ATP binding site.

It belongs to the LpxK family.

The catalysed reaction is a lipid A disaccharide + ATP = a lipid IVA + ADP + H(+). It functions in the pathway glycolipid biosynthesis; lipid IV(A) biosynthesis; lipid IV(A) from (3R)-3-hydroxytetradecanoyl-[acyl-carrier-protein] and UDP-N-acetyl-alpha-D-glucosamine: step 6/6. In terms of biological role, transfers the gamma-phosphate of ATP to the 4'-position of a tetraacyldisaccharide 1-phosphate intermediate (termed DS-1-P) to form tetraacyldisaccharide 1,4'-bis-phosphate (lipid IVA). In Dinoroseobacter shibae (strain DSM 16493 / NCIMB 14021 / DFL 12), this protein is Tetraacyldisaccharide 4'-kinase.